A 236-amino-acid chain; its full sequence is Small ribosomal subunit protein uS2c (236 aa).

Belongs to the universal ribosomal protein uS2 family.

The protein localises to the plastid. It is found in the chloroplast. This chain is Small ribosomal subunit protein uS2c (rps2), found in Gossypium barbadense (Sea Island cotton).